We begin with the raw amino-acid sequence, 464 residues long: Aspartyl protease AED1 (464 aa).

Residues 1–25 form the signal peptide; the sequence is MSIMRNFLSMIIMLCVCLNWCFAEG. The Peptidase A1 domain occupies 132 to 460; that stretch reads YIVTIGIGTP…DVAGGRVGFA (329 aa). Residues D150 and D345 contribute to the active site. C384 and C425 are disulfide-bonded.

The protein belongs to the peptidase A1 family.

The protein localises to the secreted. The protein resides in the extracellular space. It localises to the apoplast. Its function is as follows. Aspartyl protease involved in a homeostatic feedback mechanism regulating systemic immunity. Has only mild or no influence on local defenses. Acts downstream of salicylic acid to suppress systemic immunity. This chain is Aspartyl protease AED1, found in Arabidopsis thaliana (Mouse-ear cress).